We begin with the raw amino-acid sequence, 230 residues long: uncharacterized protein (230 aa).

Belongs to the transferase hexapeptide repeat family.

This is an uncharacterized protein from Escherichia coli O6:K15:H31 (strain 536 / UPEC).